The primary structure comprises 927 residues: Bifunctional glutamine synthetase adenylyltransferase/adenylyl-removing enzyme (927 aa).

The segment at methionine 1–lysine 428 is adenylyl removase. Positions aspartate 438–alanine 927 are adenylyl transferase.

The protein belongs to the GlnE family. It depends on Mg(2+) as a cofactor.

The enzyme catalyses [glutamine synthetase]-O(4)-(5'-adenylyl)-L-tyrosine + phosphate = [glutamine synthetase]-L-tyrosine + ADP. The catalysed reaction is [glutamine synthetase]-L-tyrosine + ATP = [glutamine synthetase]-O(4)-(5'-adenylyl)-L-tyrosine + diphosphate. Its function is as follows. Involved in the regulation of glutamine synthetase GlnA, a key enzyme in the process to assimilate ammonia. When cellular nitrogen levels are high, the C-terminal adenylyl transferase (AT) inactivates GlnA by covalent transfer of an adenylyl group from ATP to specific tyrosine residue of GlnA, thus reducing its activity. Conversely, when nitrogen levels are low, the N-terminal adenylyl removase (AR) activates GlnA by removing the adenylyl group by phosphorolysis, increasing its activity. The regulatory region of GlnE binds the signal transduction protein PII (GlnB) which indicates the nitrogen status of the cell. This Burkholderia pseudomallei (strain K96243) protein is Bifunctional glutamine synthetase adenylyltransferase/adenylyl-removing enzyme.